The following is a 71-amino-acid chain: Small ribosomal subunit protein bS21 (71 aa).

The segment covering 48 to 59 has biased composition (basic residues); that stretch reads EKASLAKRHAKR. The segment at 48–71 is disordered; that stretch reads EKASLAKRHAKRNARENARNTRLY. The segment covering 60-71 has biased composition (basic and acidic residues); it reads NARENARNTRLY.

This sequence belongs to the bacterial ribosomal protein bS21 family.

The polypeptide is Small ribosomal subunit protein bS21 (Actinobacillus pleuropneumoniae serotype 5b (strain L20)).